A 681-amino-acid chain; its full sequence is Potassium-transporting ATPase ATP-binding subunit (681 aa).

Transmembrane regions (helical) follow at residues 30–50 (LLVY…FFGI), 59–79 (LAIA…EAIA), 216–236 (ILLV…LPFT), and 255–275 (IALL…SIGI). Asp306 serves as the catalytic 4-aspartylphosphate intermediate. ATP contacts are provided by residues Asp343, Glu347, 376–383 (FTATTRMS), and Lys394. Residues Asp517 and Asp521 each coordinate Mg(2+). Transmembrane regions (helical) follow at residues 587–607 (FAII…LNLM), 615–635 (AILS…PLSL), and 661–681 (LVAP…LGIV).

Belongs to the cation transport ATPase (P-type) (TC 3.A.3) family. Type IA subfamily. As to quaternary structure, the system is composed of three essential subunits: KdpA, KdpB and KdpC.

The protein localises to the cell membrane. The enzyme catalyses K(+)(out) + ATP + H2O = K(+)(in) + ADP + phosphate + H(+). Its function is as follows. Part of the high-affinity ATP-driven potassium transport (or Kdp) system, which catalyzes the hydrolysis of ATP coupled with the electrogenic transport of potassium into the cytoplasm. This subunit is responsible for energy coupling to the transport system and for the release of the potassium ions to the cytoplasm. The protein is Potassium-transporting ATPase ATP-binding subunit of Listeria welshimeri serovar 6b (strain ATCC 35897 / DSM 20650 / CCUG 15529 / CIP 8149 / NCTC 11857 / SLCC 5334 / V8).